Reading from the N-terminus, the 183-residue chain is uncharacterized protein (183 aa).

The protein belongs to the herpesviridae US1 family.

This is an uncharacterized protein from Human cytomegalovirus (strain AD169) (HHV-5).